The following is a 464-amino-acid chain: NADH-quinone oxidoreductase subunit N (464 aa).

13 consecutive transmembrane segments (helical) span residues 5 to 25, 31 to 51, 63 to 83, 96 to 116, 117 to 137, 152 to 172, 188 to 208, 242 to 262, 286 to 303, 312 to 332, 358 to 378, 393 to 415, and 436 to 456; these read MLLALLPLLVLFGGSITVLFL, LLSAAMCAVVAAGFAWWPASL, LFARGCLTLWALLGAATCLLS, EYAALTLFAVLGMAILSASTS, LVSLFLGLESMTLAFYVLIAV, LLPGFLASALLAFGIALVYAA, GAPMPSIALLGWTLIMAAAAF, VFAVLLGSAPLALIVPLRPLL, MLAYSSVVHMGYLVLAVL, AGLFYLLTYSAATVGTFGLLA, AVLLTGLLLSLAGFPPLAGFM, VGLVVLALLSSLISCYYYLRPVL, and LIFVLCAGVTLVAGLYPGPFF.

It belongs to the complex I subunit 2 family. As to quaternary structure, NDH-1 is composed of 14 different subunits. Subunits NuoA, H, J, K, L, M, N constitute the membrane sector of the complex.

It localises to the cell inner membrane. It catalyses the reaction a quinone + NADH + 5 H(+)(in) = a quinol + NAD(+) + 4 H(+)(out). In terms of biological role, NDH-1 shuttles electrons from NADH, via FMN and iron-sulfur (Fe-S) centers, to quinones in the respiratory chain. The immediate electron acceptor for the enzyme in this species is believed to be ubiquinone. Couples the redox reaction to proton translocation (for every two electrons transferred, four hydrogen ions are translocated across the cytoplasmic membrane), and thus conserves the redox energy in a proton gradient. This Syntrophotalea carbinolica (strain DSM 2380 / NBRC 103641 / GraBd1) (Pelobacter carbinolicus) protein is NADH-quinone oxidoreductase subunit N.